A 112-amino-acid chain; its full sequence is Cuticle protein AM1239 (112 aa).

One can recognise a Chitin-binding type R&amp;R domain in the interval 16 to 85; sequence DGNFNYRFET…FIPTDHPLPA (70 aa). Thr-79 carries O-linked (HexNAc) threonine glycosylation.

In terms of tissue distribution, arthrodial membrane.

The protein is Cuticle protein AM1239 of Cancer pagurus (Rock crab).